Reading from the N-terminus, the 233-residue chain is MAGGLPHPVLWSTLLNVDTITIGGATVEFKHVFYTWCAMAILFSLGLIVRSSLKVVPGALQNVFEVVIGGLEDFVVGNIGEDGRKVFPLLGGIFLFILFQNLLGLVPGCDAPTANVNTNAAMALFVFGYYNYQGLKRWGPGYIKHFMGPMTWLTPLMLPLEIISHCARPLSLTLRLFGNIRGEEIVMVLFFLMAPIVGTLPVYFLFLLGKVLQAFIFFMLTMVYLKGAFEHAH.

Transmembrane regions (helical) follow at residues 29-49, 86-106, 118-135, 188-208, and 209-229; these read FKHV…GLIV, VFPL…LGLV, TNAA…YQGL, VLFF…LFLL, and GKVL…KGAF.

The protein belongs to the ATPase A chain family. As to quaternary structure, F-type ATPases have 2 components, CF(1) - the catalytic core - and CF(0) - the membrane proton channel. CF(1) has five subunits: alpha(3), beta(3), gamma(1), delta(1), epsilon(1). CF(0) has three main subunits: a(1), b(2) and c(9-12). The alpha and beta chains form an alternating ring which encloses part of the gamma chain. CF(1) is attached to CF(0) by a central stalk formed by the gamma and epsilon chains, while a peripheral stalk is formed by the delta and b chains.

Its subcellular location is the cell inner membrane. Its function is as follows. Key component of the proton channel; it plays a direct role in the translocation of protons across the membrane. In Nitratidesulfovibrio vulgaris (strain ATCC 29579 / DSM 644 / CCUG 34227 / NCIMB 8303 / VKM B-1760 / Hildenborough) (Desulfovibrio vulgaris), this protein is ATP synthase subunit a.